The sequence spans 284 residues: Acetyl-coenzyme A carboxylase carboxyl transferase subunit beta (284 aa).

The CoA carboxyltransferase N-terminal domain maps to 25-284 (LWVKCPETGA…LCKILTKSVQ (260 aa)).

The protein belongs to the AccD/PCCB family. In terms of assembly, acetyl-CoA carboxylase is a heterohexamer composed of biotin carboxyl carrier protein (AccB), biotin carboxylase (AccC) and two subunits each of ACCase subunit alpha (AccA) and ACCase subunit beta (AccD).

The protein localises to the cytoplasm. The enzyme catalyses N(6)-carboxybiotinyl-L-lysyl-[protein] + acetyl-CoA = N(6)-biotinyl-L-lysyl-[protein] + malonyl-CoA. The protein operates within lipid metabolism; malonyl-CoA biosynthesis; malonyl-CoA from acetyl-CoA: step 1/1. Its function is as follows. Component of the acetyl coenzyme A carboxylase (ACC) complex. Biotin carboxylase (BC) catalyzes the carboxylation of biotin on its carrier protein (BCCP) and then the CO(2) group is transferred by the transcarboxylase to acetyl-CoA to form malonyl-CoA. The sequence is that of Acetyl-coenzyme A carboxylase carboxyl transferase subunit beta from Liberibacter asiaticus (strain psy62).